We begin with the raw amino-acid sequence, 495 residues long: Lanosterol 14-alpha demethylase erg11 (495 aa).

The chain crosses the membrane as a helical span at residues 2 to 22; it reads AFSLVSILLSIALAWYVGYII. C442 provides a ligand contact to heme.

The protein belongs to the cytochrome P450 family. Interacts with dap1. It depends on heme as a cofactor.

The protein resides in the endoplasmic reticulum. It localises to the membrane. It carries out the reaction a 14alpha-methyl steroid + 3 reduced [NADPH--hemoprotein reductase] + 3 O2 = a Delta(14) steroid + formate + 3 oxidized [NADPH--hemoprotein reductase] + 4 H2O + 4 H(+). The enzyme catalyses a 14alpha-methyl steroid + reduced [NADPH--hemoprotein reductase] + O2 = a 14alpha-hydroxymethyl steroid + oxidized [NADPH--hemoprotein reductase] + H2O + H(+). It catalyses the reaction a 14alpha-hydroxymethyl steroid + reduced [NADPH--hemoprotein reductase] + O2 = a 14alpha-formyl steroid + oxidized [NADPH--hemoprotein reductase] + 2 H2O + H(+). The catalysed reaction is a 14alpha-formyl steroid + reduced [NADPH--hemoprotein reductase] + O2 = a Delta(14) steroid + formate + oxidized [NADPH--hemoprotein reductase] + H2O + 2 H(+). It carries out the reaction lanosterol + 3 reduced [NADPH--hemoprotein reductase] + 3 O2 = 4,4-dimethyl-5alpha-cholesta-8,14,24-trien-3beta-ol + formate + 3 oxidized [NADPH--hemoprotein reductase] + 4 H2O + 4 H(+). The enzyme catalyses lanosterol + reduced [NADPH--hemoprotein reductase] + O2 = 32-hydroxylanosterol + oxidized [NADPH--hemoprotein reductase] + H2O + H(+). It catalyses the reaction 32-hydroxylanosterol + reduced [NADPH--hemoprotein reductase] + O2 = 32-oxolanosterol + oxidized [NADPH--hemoprotein reductase] + 2 H2O + H(+). The catalysed reaction is 32-oxolanosterol + reduced [NADPH--hemoprotein reductase] + O2 = 4,4-dimethyl-5alpha-cholesta-8,14,24-trien-3beta-ol + formate + oxidized [NADPH--hemoprotein reductase] + H2O + 2 H(+). It carries out the reaction eburicol + 3 reduced [NADPH--hemoprotein reductase] + 3 O2 = 14-demethyleburicol + formate + 3 oxidized [NADPH--hemoprotein reductase] + 4 H2O + 4 H(+). The enzyme catalyses eburicol + reduced [NADPH--hemoprotein reductase] + O2 = 32-hydroxyeburicol + oxidized [NADPH--hemoprotein reductase] + H2O + H(+). It catalyses the reaction 32-hydroxyeburicol + reduced [NADPH--hemoprotein reductase] + O2 = 32-oxoeburicol + oxidized [NADPH--hemoprotein reductase] + 2 H2O + H(+). The catalysed reaction is 32-oxoeburicol + reduced [NADPH--hemoprotein reductase] + O2 = 14-demethyleburicol + formate + oxidized [NADPH--hemoprotein reductase] + H2O + 2 H(+). It participates in steroid biosynthesis; zymosterol biosynthesis; zymosterol from lanosterol: step 1/6. The protein operates within steroid metabolism; ergosterol biosynthesis. In terms of biological role, sterol 14alpha-demethylase that plays a critical role in the third module of ergosterol biosynthesis pathway, being ergosterol the major sterol component in fungal membranes that participates in a variety of functions. The third module or late pathway involves the ergosterol synthesis itself through consecutive reactions that mainly occur in the endoplasmic reticulum (ER) membrane. In filamentous fungi, during the initial step of this module, lanosterol (lanosta-8,24-dien-3beta-ol) can be metabolized to eburicol. Sterol 14alpha-demethylase catalyzes the three-step oxidative removal of the 14alpha-methyl group (C-32) of both these sterols in the form of formate, and converts eburicol and lanosterol to 14-demethyleburicol (4,4,24-trimethylergosta-8,14,24(28)-trienol) and 4,4-dimethyl-5alpha-cholesta-8,14,24-trien-3beta-ol, respectively, which are further metabolized by other enzymes in the pathway to ergosterol. Can also use substrates not intrinsic to fungi, such as 24,25-dihydrolanosterol (DHL), producing 4,4-dimethyl-8,14-cholestadien-3-beta-ol, but at lower rates than the endogenous substrates. The protein is Lanosterol 14-alpha demethylase erg11 of Schizosaccharomyces pombe (strain 972 / ATCC 24843) (Fission yeast).